Consider the following 131-residue polypeptide: D-ribose pyranase (131 aa).

The active-site Proton donor is the histidine 20. Substrate contacts are provided by residues aspartate 28, histidine 98, and 120-122; that span reads YAN.

This sequence belongs to the RbsD / FucU family. RbsD subfamily. In terms of assembly, homodecamer.

The protein localises to the cytoplasm. The catalysed reaction is beta-D-ribopyranose = beta-D-ribofuranose. It functions in the pathway carbohydrate metabolism; D-ribose degradation; D-ribose 5-phosphate from beta-D-ribopyranose: step 1/2. Functionally, catalyzes the interconversion of beta-pyran and beta-furan forms of D-ribose. This chain is D-ribose pyranase, found in Bacillus cereus (strain ATCC 14579 / DSM 31 / CCUG 7414 / JCM 2152 / NBRC 15305 / NCIMB 9373 / NCTC 2599 / NRRL B-3711).